An 85-amino-acid chain; its full sequence is U1-theraphotoxin-Hs1a (85 aa).

An N-terminal signal peptide occupies residues 1–22 (MKVTLIAILTCAAVLVLHTTAA). The propeptide occupies 23 to 48 (EELEAESQLMEVGMPDTELAAVDEER). Cystine bridges form between C52/C66, C56/C77, and C71/C82.

As to quaternary structure, heterodimer composed of the two variants Ile-58 and Gln-58. In terms of tissue distribution, expressed by the venom gland.

Its subcellular location is the secreted. Lethal neurotoxin that blocks neuromuscular transmission. Acts cooperatively to potentiate the activity of huwentoxin-I. This toxin is active against insects. The polypeptide is U1-theraphotoxin-Hs1a (Cyriopagopus schmidti (Chinese bird spider)).